Here is a 1723-residue protein sequence, read N- to C-terminus: Lys-gingipain HG66 (1723 aa).

Positions 1–24 are cleaved as a signal peptide; it reads MRKLLLLIAASLLGVGLYAQNAKI. A propeptide spanning residues 25 to 228 is cleaved from the precursor; the sequence is KLDAPTTRTT…ETAYKQLFNR (204 aa). D313, D337, D339, F341, and E343 together coordinate Ca(2+). The active-site Proton donor is the H444. The active-site Nucleophile is C477. Positions 482 and 491 each coordinate Ca(2+). Residues 965 to 985 form a disordered region; that stretch reads DAPNGTPNPNPNPNPGTTTLS. Residues S987, E989, D1000, D1002, D1004, H1006, S1021, G1023, N1042, D1145, and E1146 each coordinate Ca(2+).

It belongs to the peptidase C25 family. In terms of processing, proteolytically cleaved into a catalytic subunit and three adhesins. Arg-gingipain is involved in this post-translational processing.

The protein localises to the secreted. It carries out the reaction Endopeptidase with strict specificity for lysyl bonds.. Functionally, cysteine proteinase with a strong preference for substrates with Lys in the P1 position. Hydrolyzes bovine hemoglobin, bovine serum albumin, casein, human placental type I collagen and human IgA and IgG. Disrupts the functions of polymorphonuclear leukocytes. May act as a virulence factor in the development of peridontal disease. Involved in the coaggregation of P.gingivalis with other oral bacteria. This Porphyromonas gingivalis (Bacteroides gingivalis) protein is Lys-gingipain HG66.